We begin with the raw amino-acid sequence, 93 residues long: Large ribosomal subunit protein bL31 (93 aa).

The disordered stretch occupies residues valine 72–lysine 93. Over residues asparagine 81–lysine 93 the composition is skewed to basic and acidic residues.

The protein belongs to the bacterial ribosomal protein bL31 family. Type A subfamily. Part of the 50S ribosomal subunit.

In terms of biological role, binds the 23S rRNA. This is Large ribosomal subunit protein bL31 from Onion yellows phytoplasma (strain OY-M).